Here is a 365-residue protein sequence, read N- to C-terminus: Dual-specificity RNA methyltransferase RlmN (365 aa).

Glu-91 (proton acceptor) is an active-site residue. Positions 97–337 (ETSRGTLCIS…TTVRKTRGDD (241 aa)) constitute a Radical SAM core domain. A disulfide bond links Cys-104 and Cys-342. Residues Cys-111, Cys-115, and Cys-118 each contribute to the [4Fe-4S] cluster site. Residues 168-169 (GE), Ser-200, 222-224 (SLH), and Asn-299 each bind S-adenosyl-L-methionine. The S-methylcysteine intermediate role is filled by Cys-342.

It belongs to the radical SAM superfamily. RlmN family. [4Fe-4S] cluster serves as cofactor.

It localises to the cytoplasm. It catalyses the reaction adenosine(2503) in 23S rRNA + 2 reduced [2Fe-2S]-[ferredoxin] + 2 S-adenosyl-L-methionine = 2-methyladenosine(2503) in 23S rRNA + 5'-deoxyadenosine + L-methionine + 2 oxidized [2Fe-2S]-[ferredoxin] + S-adenosyl-L-homocysteine. It carries out the reaction adenosine(37) in tRNA + 2 reduced [2Fe-2S]-[ferredoxin] + 2 S-adenosyl-L-methionine = 2-methyladenosine(37) in tRNA + 5'-deoxyadenosine + L-methionine + 2 oxidized [2Fe-2S]-[ferredoxin] + S-adenosyl-L-homocysteine. In terms of biological role, specifically methylates position 2 of adenine 2503 in 23S rRNA and position 2 of adenine 37 in tRNAs. m2A2503 modification seems to play a crucial role in the proofreading step occurring at the peptidyl transferase center and thus would serve to optimize ribosomal fidelity. This chain is Dual-specificity RNA methyltransferase RlmN, found in Nitrosospira multiformis (strain ATCC 25196 / NCIMB 11849 / C 71).